A 500-amino-acid chain; its full sequence is MCPRHPEPVPLAHPLPVLKEALEKVDQILRQAMSAPGVAAMSAVVIHNDTVLWTGNFGKKNGSDPASGAPNEYTMYRISSISKIFPVLMLYRLWEEGIVASLDDPLERYASTFTINNPLGLASAEQQGLILRRMASQLSGLPRRLRSTSLLWKGSTQEALNLLKDDVLVVDPGTRCHYSTLAFSLLAHVLAAHTAQGDYQRWVSENVLEPLGMADTGFDLTPDVRARLAAGFYGSGRPAPLYDLGWYRPSGQMYSTAADLAKLAVALLGGGPRRLLRPDAAKTLLAPLLACPGAYFANETGTPWEFHAQRGYRVVRKDGDLDGYAATFSLVPPLRLGLVLLLAGPRPPGPDLVARAYDELLPALERALREAEPGPAPPPTAHPFAGYFTFANLTFYEVRAGPAGELRLRQFGPRVEALVPPAFRTLALRHLHGRVFQLHVAHEFPCALPLGDAWLSLEAQHGQLVNFYPLDHHGLSPGFDVPGLNTYRVLRLRGKPVFKT.

Belongs to the beta-lactamase family.

This Homo sapiens (Human) protein is Putative beta-lactamase-like 1 (LACTBL1).